A 209-amino-acid chain; its full sequence is Ribosomal RNA large subunit methyltransferase E (209 aa).

S-adenosyl-L-methionine contacts are provided by glycine 63, tryptophan 65, aspartate 83, aspartate 99, and aspartate 124. The active-site Proton acceptor is lysine 164.

The protein belongs to the class I-like SAM-binding methyltransferase superfamily. RNA methyltransferase RlmE family.

Its subcellular location is the cytoplasm. It catalyses the reaction uridine(2552) in 23S rRNA + S-adenosyl-L-methionine = 2'-O-methyluridine(2552) in 23S rRNA + S-adenosyl-L-homocysteine + H(+). Functionally, specifically methylates the uridine in position 2552 of 23S rRNA at the 2'-O position of the ribose in the fully assembled 50S ribosomal subunit. This Klebsiella pneumoniae (strain 342) protein is Ribosomal RNA large subunit methyltransferase E.